The following is a 502-amino-acid chain: Lysine--tRNA ligase (502 aa).

Residues Glu413 and Glu420 each contribute to the Mg(2+) site.

Belongs to the class-II aminoacyl-tRNA synthetase family. In terms of assembly, homodimer. Requires Mg(2+) as cofactor.

The protein localises to the cytoplasm. The catalysed reaction is tRNA(Lys) + L-lysine + ATP = L-lysyl-tRNA(Lys) + AMP + diphosphate. This is Lysine--tRNA ligase from Haemophilus influenzae (strain PittEE).